The primary structure comprises 116 residues: UPF0298 protein EF_2453 (116 aa).

Belongs to the UPF0298 family.

It is found in the cytoplasm. The chain is UPF0298 protein EF_2453 from Enterococcus faecalis (strain ATCC 700802 / V583).